The primary structure comprises 250 residues: Small ribosomal subunit protein uS2 (250 aa).

The protein belongs to the universal ribosomal protein uS2 family.

This is Small ribosomal subunit protein uS2 from Paraburkholderia phytofirmans (strain DSM 17436 / LMG 22146 / PsJN) (Burkholderia phytofirmans).